We begin with the raw amino-acid sequence, 406 residues long: Argininosuccinate synthase (406 aa).

ATP contacts are provided by residues alanine 10–serine 18 and alanine 37. Residues tyrosine 88 and serine 93 each contribute to the L-citrulline site. Residue glycine 118 participates in ATP binding. L-aspartate-binding residues include threonine 120, asparagine 124, and aspartate 125. Residue asparagine 124 participates in L-citrulline binding. Positions 128, 179, 188, 264, and 276 each coordinate L-citrulline.

The protein belongs to the argininosuccinate synthase family. Type 1 subfamily. Homotetramer.

Its subcellular location is the cytoplasm. It carries out the reaction L-citrulline + L-aspartate + ATP = 2-(N(omega)-L-arginino)succinate + AMP + diphosphate + H(+). The protein operates within amino-acid biosynthesis; L-arginine biosynthesis; L-arginine from L-ornithine and carbamoyl phosphate: step 2/3. This Dinoroseobacter shibae (strain DSM 16493 / NCIMB 14021 / DFL 12) protein is Argininosuccinate synthase.